The sequence spans 186 residues: Elongation factor P (186 aa).

It belongs to the elongation factor P family.

It is found in the cytoplasm. Its pathway is protein biosynthesis; polypeptide chain elongation. In terms of biological role, involved in peptide bond synthesis. Stimulates efficient translation and peptide-bond synthesis on native or reconstituted 70S ribosomes in vitro. Probably functions indirectly by altering the affinity of the ribosome for aminoacyl-tRNA, thus increasing their reactivity as acceptors for peptidyl transferase. This Shewanella denitrificans (strain OS217 / ATCC BAA-1090 / DSM 15013) protein is Elongation factor P.